Consider the following 100-residue polypeptide: Aspartyl/glutamyl-tRNA(Asn/Gln) amidotransferase subunit C (100 aa).

This sequence belongs to the GatC family. As to quaternary structure, heterotrimer of A, B and C subunits.

It carries out the reaction L-glutamyl-tRNA(Gln) + L-glutamine + ATP + H2O = L-glutaminyl-tRNA(Gln) + L-glutamate + ADP + phosphate + H(+). The catalysed reaction is L-aspartyl-tRNA(Asn) + L-glutamine + ATP + H2O = L-asparaginyl-tRNA(Asn) + L-glutamate + ADP + phosphate + 2 H(+). In terms of biological role, allows the formation of correctly charged Asn-tRNA(Asn) or Gln-tRNA(Gln) through the transamidation of misacylated Asp-tRNA(Asn) or Glu-tRNA(Gln) in organisms which lack either or both of asparaginyl-tRNA or glutaminyl-tRNA synthetases. The reaction takes place in the presence of glutamine and ATP through an activated phospho-Asp-tRNA(Asn) or phospho-Glu-tRNA(Gln). This Corynebacterium aurimucosum (strain ATCC 700975 / DSM 44827 / CIP 107346 / CN-1) (Corynebacterium nigricans) protein is Aspartyl/glutamyl-tRNA(Asn/Gln) amidotransferase subunit C.